The following is a 226-amino-acid chain: MPEVKRLSDGIFEVIKDKKQLATKNLDPGKTVYGEKLIAVEGVEYRTWDPRRSKLGAMVLKKFNIPLTKNSKVLYLGAASGTTVSHVSDIVSEGAVYAVEFAPRSMRDLIGLASRRKNIHPILADAGKPDSYSHLVEPVDLIFQDVAQPNQAEIAARNAVRFLKREGYLLLSIKARSIDTVAKPKEVFKAEVKKLEQAFEPRFEILNAKDLMPYHEDHLGVLAKLK.

S-adenosyl-L-methionine is bound by residues 82-83 (TT), 100-101 (EF), 125-126 (DA), and 145-148 (DVAQ).

This sequence belongs to the methyltransferase superfamily. Fibrillarin family. Interacts with nop5. Component of box C/D small ribonucleoprotein (sRNP) particles that contain rpl7ae, FlpA and nop5, plus a guide RNA.

In terms of biological role, involved in pre-rRNA and tRNA processing. Utilizes the methyl donor S-adenosyl-L-methionine to catalyze the site-specific 2'-hydroxyl methylation of ribose moieties in rRNA and tRNA. Site specificity is provided by a guide RNA that base pairs with the substrate. Methylation occurs at a characteristic distance from the sequence involved in base pairing with the guide RNA. The protein is Fibrillarin-like rRNA/tRNA 2'-O-methyltransferase of Methanosarcina barkeri (strain Fusaro / DSM 804).